Consider the following 43-residue polypeptide: Hemolysin H1U (43 aa).

M1 carries the post-translational modification N-formylmethionine.

It belongs to the staphylococcal hemolytic protein family.

The protein localises to the secreted. In terms of biological role, virulence factor. Causes hemolysis of erythrocytes. Acts synergistically with beta-hemolysins from S.aureus ATCC 25923. Cytotoxic towards human dermal fibroblasts. The protein is Hemolysin H1U of Staphylococcus ureilyticus (Staphylococcus cohnii subsp. urealyticus).